We begin with the raw amino-acid sequence, 282 residues long: Bicarbonate transport ATP-binding protein CmpD (282 aa).

In terms of domain architecture, ABC transporter spans 24-257 (LTIENVSKVY…RPRDRDRIME (234 aa)). 60 to 67 (GHSGCGKS) lines the ATP pocket.

The protein belongs to the ABC transporter superfamily. Nitrate/nitrite/cyanate uptake transporter (NitT) (TC 3.A.1.16) family. In terms of assembly, the complex is composed of two ATP-binding proteins (CmpC and CmpD), a transmembrane protein (CmpB) and a solute-binding protein (CmpA).

It is found in the cell inner membrane. Its function is as follows. Part of the ABC transporter complex CmpABCD involved in bicarbonate transport. Responsible for energy coupling to the transport system. The protein is Bicarbonate transport ATP-binding protein CmpD (cmpD) of Synechocystis sp. (strain ATCC 27184 / PCC 6803 / Kazusa).